The following is a 234-amino-acid chain: Opacity protein opA55 (234 aa).

Residue Ala-1 is a signal peptide.

This sequence belongs to the opacity porin family.

The protein resides in the cell outer membrane. In terms of biological role, implicated in a number of adherence functions. OPA proteins are implicated in pathogenesis and are subject to phase variation. In Neisseria gonorrhoeae, this protein is Opacity protein opA55 (opaE).